Reading from the N-terminus, the 466-residue chain is Cysteine--tRNA ligase (466 aa).

A Zn(2+)-binding site is contributed by Cys-28. The 'HIGH' region signature appears at 30–40 (PTVYNYIHIGN). Cys-208, His-233, and Glu-237 together coordinate Zn(2+). The 'KMSKS' region motif lies at 265–269 (KMSKS). Lys-268 lines the ATP pocket.

This sequence belongs to the class-I aminoacyl-tRNA synthetase family. In terms of assembly, monomer. Zn(2+) serves as cofactor.

The protein localises to the cytoplasm. It catalyses the reaction tRNA(Cys) + L-cysteine + ATP = L-cysteinyl-tRNA(Cys) + AMP + diphosphate. The polypeptide is Cysteine--tRNA ligase (Staphylococcus aureus (strain bovine RF122 / ET3-1)).